A 61-amino-acid polypeptide reads, in one-letter code: MKPAIFLMLFVAMFLISEGEGFKPKDAPQERSVFSPVVQSCPRCHRRDHFGKCRKLDPCPD.

The N-terminal stretch at 1–21 (MKPAIFLMLFVAMFLISEGEG) is a signal peptide. Residues 22–31 (FKPKDAPQER) constitute a propeptide that is removed on maturation. P36 carries the post-translational modification Hydroxyproline. Intrachain disulfides connect C41–C53 and C44–C59.

The protein belongs to the Hau1a/HC18/HC19 family.

Its subcellular location is the secreted. It is found in the nematocyst. Toxin that is lethal to crab. Does not produce the typical symptoms associated with sodium channel toxins in crabs, suggesting that it likely does not act on sodium channels. This Radianthus crispa (Leathery sea anemone) protein is U-stichotoxin-Hcr1a.